A 111-amino-acid polypeptide reads, in one-letter code: Putative lipid-binding protein AIR1 (111 aa).

An N-terminal signal peptide occupies residues 1-23; that stretch reads MAPRTPLALFVSLNLLFFTYTSA. Cystine bridges form between cysteine 28–cysteine 58, cysteine 38–cysteine 57, and cysteine 74–cysteine 110.

Belongs to the plant LTP family. PEARLI1 subfamily.

The protein localises to the secreted. The protein is Putative lipid-binding protein AIR1 (AIR1) of Arabidopsis thaliana (Mouse-ear cress).